Consider the following 500-residue polypeptide: Cytochrome P450 71B34 (500 aa).

The helical transmembrane segment at 1 to 21 (MTNIWLLSLIFVICILVAVFN) threads the bilayer. C440 is a heme binding site.

The protein belongs to the cytochrome P450 family. It depends on heme as a cofactor.

Its subcellular location is the membrane. The protein is Cytochrome P450 71B34 (CYP71B34) of Arabidopsis thaliana (Mouse-ear cress).